The primary structure comprises 522 residues: Zinc finger protein STOP1 homolog (522 aa).

Polar residues-rich tracts occupy residues 1–12 (MDSGLGRSSETS) and 19–40 (MASNATRNTDPDQQGVRFSSMD). Disordered regions lie at residues 1–43 (MDSG…DQPP) and 234–260 (CGGEGSEPIPMEDHDVKESDDGGEREN). The segment covering 244 to 260 (MEDHDVKESDDGGEREN) has biased composition (basic and acidic residues). Residues 282 to 304 (HFCLICGKGFKRDANLRMHMRGH) form a C2H2-type 1 zinc finger. The C2H2-type 2; atypical zinc finger occupies 390-421 (KHCGRDKWLCSCGTTFSRKDKLFGHVALFQGH).

It localises to the nucleus. Functionally, probable transcription factor that may be involved in aluminum tolerance. In Oryza sativa subsp. japonica (Rice), this protein is Zinc finger protein STOP1 homolog.